Here is a 598-residue protein sequence, read N- to C-terminus: Probable ATP-dependent RNA helicase DDX52 (598 aa).

Lys15 carries the N6-acetyllysine modification. Phosphoserine is present on Ser39. A disordered region spans residues 59–98 (CGGLQTQQELQNEETTEGGLLERSKEPKKKKRKKMTADVP). Positions 166-194 (QLDQEYKISPRLLQNILDAGFQVPTPIQM) match the Q motif motif. In terms of domain architecture, Helicase ATP-binding spans 197-375 (IPVMLHGREL…KLNLDNIVSV (179 aa)). 210 to 217 (APTGSGKT) is a binding site for ATP. The DEAD box signature appears at 319–322 (DESD). The 162-residue stretch at 386 to 547 (TVEQELLFVG…PVPEYIKGFQ (162 aa)) folds into the Helicase C-terminal domain. The disordered stretch occupies residues 578 to 598 (AKQKKVAGQNSKKKETLKGKS). A compositionally biased stretch (basic and acidic residues) spans 589-598 (KKKETLKGKS).

Belongs to the DEAD box helicase family. DDX52/ROK1 subfamily.

It localises to the nucleus. The protein resides in the nucleolus. The catalysed reaction is ATP + H2O = ADP + phosphate + H(+). In terms of biological role, required for efficient ribosome biogenesis. May control cell cycle progression by regulating translation of mRNAs that contain a terminal oligo pyrimidine (TOP) motif in their 5' UTRs, such as GTPBP4. The protein is Probable ATP-dependent RNA helicase DDX52 (Ddx52) of Rattus norvegicus (Rat).